The following is a 552-amino-acid chain: uncharacterized protein (552 aa).

This is an uncharacterized protein from Bacillus subtilis (strain 168).